A 313-amino-acid polypeptide reads, in one-letter code: Cilia- and flagella-associated protein 36 (313 aa).

Phosphoserine occurs at positions 85 and 147. Residues 147–187 (SDLEQEEMKILKEVLRKSKEEYDQEEERKRKKQLSEAKTEE) adopt a coiled-coil conformation. Disordered regions lie at residues 165 to 204 (KEEY…SQGD) and 262 to 292 (KIKQ…TAEE). A compositionally biased stretch (basic and acidic residues) spans 179 to 189 (QLSEAKTEEHP). The span at 192–203 (ANETAKMSNSQG) shows a compositional bias: polar residues. Ser201 is modified (phosphoserine). The segment covering 271 to 292 (QKGKPAGEVEEMTEKPEMTAEE) has biased composition (basic and acidic residues).

This sequence belongs to the CFAP36 family. In terms of assembly, interacts with ARL3.

The protein localises to the nucleus. The protein resides in the cytoplasm. It is found in the cell projection. It localises to the cilium. Its subcellular location is the flagellum. Its function is as follows. May act as an effector for ARL3. In Bos taurus (Bovine), this protein is Cilia- and flagella-associated protein 36.